The chain runs to 85 residues: Small ribosomal subunit protein uS17 (85 aa).

This sequence belongs to the universal ribosomal protein uS17 family. In terms of assembly, part of the 30S ribosomal subunit.

In terms of biological role, one of the primary rRNA binding proteins, it binds specifically to the 5'-end of 16S ribosomal RNA. In Blochmanniella floridana, this protein is Small ribosomal subunit protein uS17.